A 489-amino-acid chain; its full sequence is WD repeat-containing protein JIP5 (489 aa).

One copy of the WD 1 repeat lies at 4-45 (PLSSDALDLCFHPAAETNLLAVGLISGKIQLINYDDYLSSPS). Residues 46-66 (SSRTPLAPPSKKSKPSTISSA) are disordered. The WD 2 repeat unit spans residues 124–163 (EVHDAAPSRVLPVDESLVVTGDDDGVVRLWDVRKGGGKGI). The tract at residues 192-246 (SIKEAKKSKTQLKKQRRRARQAERLKEHDKEKREQNASDTEASEPDSEDDAAIKV) is disordered. Positions 199 to 210 (SKTQLKKQRRRA) are enriched in basic residues. Over residues 211 to 227 (RQAERLKEHDKEKREQN) the composition is skewed to basic and acidic residues. Over residues 232–241 (EASEPDSEDD) the composition is skewed to acidic residues. 2 WD repeats span residues 279 to 318 (DQED…LDHV) and 323 to 363 (GHPA…GVIA). Positions 417–489 (IVGLAEDDSD…AGKGGFFSDL (73 aa)) are disordered. Composition is skewed to acidic residues over residues 421–440 (AEDD…DDDD) and 449–472 (DGAE…DSED).

It belongs to the WD repeat WDR55 family.

Its subcellular location is the nucleus. The protein resides in the nucleolus. The polypeptide is WD repeat-containing protein JIP5 (JIP5) (Mycosarcoma maydis (Corn smut fungus)).